Consider the following 187-residue polypeptide: Probable DNA-directed RNA polymerase subunit delta (187 aa).

The HTH HARE-type domain maps to 14-81 (LSMIEVAHAL…GNNVWALRSW (68 aa)). The disordered stretch occupies residues 96–187 (EIEDEEEEKP…EDDSDDTDED (92 aa)). 2 stretches are compositionally biased toward acidic residues: residues 117–149 (IEDE…EDKD) and 157–187 (ELAE…TDED).

This sequence belongs to the RpoE family. As to quaternary structure, RNAP is composed of a core of 2 alpha, a beta and a beta' subunits. The core is associated with a delta subunit and one of several sigma factors.

Participates in both the initiation and recycling phases of transcription. In the presence of the delta subunit, RNAP displays an increased specificity of transcription, a decreased affinity for nucleic acids, and an increased efficiency of RNA synthesis because of enhanced recycling. This chain is Probable DNA-directed RNA polymerase subunit delta, found in Lactococcus lactis subsp. cremoris (strain SK11).